Here is a 489-residue protein sequence, read N- to C-terminus: NADH-quinone oxidoreductase subunit N (489 aa).

Transmembrane regions (helical) follow at residues 15–35, 44–64, 78–98, 106–126, 131–151, 166–186, 209–229, 244–264, 278–298, 306–326, 333–353, 378–398, 412–432, and 459–479; these read APLL…VFFI, GYLA…LWGV, FALT…TMSL, IEQG…ILLA, LIVL…LTGF, LVLG…IFGA, LTLL…KVAL, PTPV…AALV, WLPV…LGAV, MLAY…MVAG, AFLF…AVLI, LAVA…MAGF, GLPW…FFYL, and IALA…VFAL.

The protein belongs to the complex I subunit 2 family. NDH-1 is composed of 14 different subunits. Subunits NuoA, H, J, K, L, M, N constitute the membrane sector of the complex.

It is found in the cell membrane. It catalyses the reaction a quinone + NADH + 5 H(+)(in) = a quinol + NAD(+) + 4 H(+)(out). Its function is as follows. NDH-1 shuttles electrons from NADH, via FMN and iron-sulfur (Fe-S) centers, to quinones in the respiratory chain. The immediate electron acceptor for the enzyme in this species is believed to be ubiquinone. Couples the redox reaction to proton translocation (for every two electrons transferred, four hydrogen ions are translocated across the cytoplasmic membrane), and thus conserves the redox energy in a proton gradient. In Chloroflexus aggregans (strain MD-66 / DSM 9485), this protein is NADH-quinone oxidoreductase subunit N.